A 209-amino-acid polypeptide reads, in one-letter code: MAEVEAALPVAATETPEVAAEGDAGAAEAKGPHKLQRQWTFWYDIQTKPKPGAAWGTSLKKGYTFDTVEEFWCLYDQIFRPSKLVGSADFHLFKAGVEPKWEDPECANGGKWTVISSRKTNLDTMWLETCMALIGEQFDESQEICGVVASVRQRQDKLSLWTKTASNEAVQVDIGKKWKEVIDYNDKMVYSFHDDSRSQKPSRGGRYTV.

Residues 1 to 29 (MAEVEAALPVAATETPEVAAEGDAGAAEA) form a disordered region. Positions 9–29 (PVAATETPEVAAEGDAGAAEA) are enriched in low complexity. MRNA contacts are provided by residues 51–56 (PGAAWG), Lys-83, and 101–102 (WE). An intrachain disulfide couples Cys-106 to Cys-145. Residues 152–157 (RQRQDK) and 197–200 (RSQK) each bind mRNA.

Belongs to the eukaryotic initiation factor 4E family. In terms of assembly, EIF4F is a multi-subunit complex, the composition of which varies with external and internal environmental conditions. It is composed of at least EIF4A, EIF4E and EIF4G. EIF4E is also known to interact with other partners. In higher plants two isoforms of EIF4F have been identified, named isoform EIF4F and isoform EIF(iso)4F. Isoform EIF4F has subunits p220 and p26, whereas isoform EIF(iso)4F has subunits p82 and p28. According to the redox status, the Cys-106-Cys-145 disulfide bridge may have a role in regulating protein function by affecting its ability to bind capped mRNA.

Its subcellular location is the cytoplasm. It is found in the nucleus. In terms of biological role, component of the protein complex eIF4F, which is involved in the recognition of the mRNA cap, ATP-dependent unwinding of 5'-terminal secondary structure and recruitment of mRNA to the ribosome. Recognizes and binds the 7-methylguanosine-containing mRNA cap during an early step in the initiation of protein synthesis and facilitates ribosome binding by inducing the unwinding of the mRNAs secondary structures. The polypeptide is Eukaryotic translation initiation factor isoform 4E-2 (Triticum aestivum (Wheat)).